The chain runs to 114 residues: Large ribosomal subunit protein uL22 (114 aa).

This sequence belongs to the universal ribosomal protein uL22 family. In terms of assembly, part of the 50S ribosomal subunit.

In terms of biological role, this protein binds specifically to 23S rRNA; its binding is stimulated by other ribosomal proteins, e.g. L4, L17, and L20. It is important during the early stages of 50S assembly. It makes multiple contacts with different domains of the 23S rRNA in the assembled 50S subunit and ribosome. Functionally, the globular domain of the protein is located near the polypeptide exit tunnel on the outside of the subunit, while an extended beta-hairpin is found that lines the wall of the exit tunnel in the center of the 70S ribosome. This is Large ribosomal subunit protein uL22 from Myxococcus xanthus (strain DK1622).